Reading from the N-terminus, the 422-residue chain is Gamma-glutamyl phosphate reductase (422 aa).

Belongs to the gamma-glutamyl phosphate reductase family.

It localises to the cytoplasm. The enzyme catalyses L-glutamate 5-semialdehyde + phosphate + NADP(+) = L-glutamyl 5-phosphate + NADPH + H(+). The protein operates within amino-acid biosynthesis; L-proline biosynthesis; L-glutamate 5-semialdehyde from L-glutamate: step 2/2. Functionally, catalyzes the NADPH-dependent reduction of L-glutamate 5-phosphate into L-glutamate 5-semialdehyde and phosphate. The product spontaneously undergoes cyclization to form 1-pyrroline-5-carboxylate. The sequence is that of Gamma-glutamyl phosphate reductase from Shewanella piezotolerans (strain WP3 / JCM 13877).